The following is a 283-amino-acid chain: Prolyl 4-hydroxylase 1 (283 aa).

The Cytoplasmic portion of the chain corresponds to 1 to 6 (MAPAMK). A helical; Signal-anchor for type II membrane protein membrane pass occupies residues 7-27 (IVFGLLTFVTVGMVIGSLLQL). Residues 28-283 (AFINRLEDSY…TKWMRQKATS (256 aa)) are Lumenal-facing. Positions 162 to 279 (NGELIQVLRY…KWSATKWMRQ (118 aa)) constitute a Fe2OG dioxygenase domain. Fe cation is bound by residues His-180, Asp-182, and His-260. Lys-270 contacts 2-oxoglutarate.

The protein belongs to the P4HA family. It depends on Fe(2+) as a cofactor. The cofactor is L-ascorbate.

It is found in the endoplasmic reticulum membrane. The enzyme catalyses L-prolyl-[collagen] + 2-oxoglutarate + O2 = trans-4-hydroxy-L-prolyl-[collagen] + succinate + CO2. Catalyzes the post-translational formation of 4-hydroxyproline in -Xaa-Pro-Gly- sequences in proline-rich peptide sequences of plant glycoproteins and other proteins. Hydroxylates preferentially prolines in second positions in the -Pro-Pro-Gly-triplets. Hydroxyprolines are important constituent of many plant cell wall glycoproteins such as extensins, hydroxyproline-rich glycoproteins, lectins and arabinogalactan proteins. Can hydroxylate collagen-like peptides and hypoxia-inducible transcription factor peptides. This is Prolyl 4-hydroxylase 1 from Arabidopsis thaliana (Mouse-ear cress).